Reading from the N-terminus, the 440-residue chain is tRNA(Ile)-lysidine synthase (440 aa).

An ATP-binding site is contributed by 31–36 (SGGADS).

This sequence belongs to the tRNA(Ile)-lysidine synthase family.

Its subcellular location is the cytoplasm. The catalysed reaction is cytidine(34) in tRNA(Ile2) + L-lysine + ATP = lysidine(34) in tRNA(Ile2) + AMP + diphosphate + H(+). In terms of biological role, ligates lysine onto the cytidine present at position 34 of the AUA codon-specific tRNA(Ile) that contains the anticodon CAU, in an ATP-dependent manner. Cytidine is converted to lysidine, thus changing the amino acid specificity of the tRNA from methionine to isoleucine. The chain is tRNA(Ile)-lysidine synthase from Borreliella afzelii (strain PKo) (Borrelia afzelii).